Consider the following 279-residue polypeptide: Threonylcarbamoyl-AMP synthase (279 aa).

A mitochondrion-targeting transit peptide spans 1–55 (MSPARRCRGMRAAVAASVGLSEGPAGSRSGRLFRPPSPAPAAPGARLLRLPGSGA). The segment at 21–41 (SEGPAGSRSGRLFRPPSPAPA) is disordered. At Ser-60 the chain carries Phosphoserine. The YrdC-like domain occupies 67–257 (TEALRAAVAE…KFGIIRPGCA (191 aa)).

This sequence belongs to the SUA5 family. In terms of assembly, interacts with RSC1A1. Ubiquitously expressed.

The protein localises to the cytoplasm. The protein resides in the mitochondrion. Its subcellular location is the cell membrane. The enzyme catalyses L-threonine + hydrogencarbonate + ATP = L-threonylcarbamoyladenylate + diphosphate + H2O. Cytoplasmic and mitochondrial threonylcarbamoyl-AMP synthase required for the formation of a threonylcarbamoyl group on adenosine at position 37 (t(6)A37) in tRNAs that read codons beginning with adenine. Catalyzes the conversion of L-threonine, HCO(3)(-)/CO(2) and ATP to give threonylcarbamoyl-AMP (TC-AMP) as the acyladenylate intermediate, with the release of diphosphate. Participates in t(6)A37 formation in cytoplasmic and mitochondrial tRNAs. May regulate the activity of some transporters. This chain is Threonylcarbamoyl-AMP synthase, found in Homo sapiens (Human).